A 267-amino-acid chain; its full sequence is Meiosis-specific protein ISC10 (267 aa).

The segment covering 1-13 (MDVDERLHQDENQ) has biased composition (basic and acidic residues). A disordered region spans residues 1 to 26 (MDVDERLHQDENQTHPFSQKKSSSFL). Positions 14–25 (THPFSQKKSSSF) are enriched in polar residues.

In terms of biological role, indispensable for spore formation. This chain is Meiosis-specific protein ISC10 (ISC10), found in Saccharomyces cerevisiae (strain ATCC 204508 / S288c) (Baker's yeast).